Consider the following 147-residue polypeptide: Antiholin-like protein LrgA (147 aa).

Helical transmembrane passes span 12 to 32, 35 to 55, 74 to 94, and 98 to 118; these read PAHF…SKII, FMPI…VLLC, NIGL…GVIS, and FLII…TGYV.

The protein belongs to the CidA/LrgA family. LrgA subfamily.

The protein resides in the cell membrane. Inhibits the expression or activity of extracellular murein hydrolases by interacting, possibly with LrgB, with the holin-like proteins CidA and/or CidB. The LrgAB and CidAB proteins may affect the proton motive force of the membrane. May be involved in programmed cell death (PCD), possibly triggering PCD in response to antibiotics and environmental stresses. The protein is Antiholin-like protein LrgA of Staphylococcus aureus (strain USA300).